Here is a 1007-residue protein sequence, read N- to C-terminus: Glucose transport transcription regulator RGT1 (1007 aa).

A compositionally biased stretch (polar residues) spans 1 to 11 (MLSALIQNGMS). Residues 1–115 (MLSALIQNGM…ESRRRSKVSR (115 aa)) are disordered. The segment covering 21-33 (NNTTNGSSSTTDN) has biased composition (low complexity). Composition is skewed to polar residues over residues 42-65 (NTEN…SKQD), 74-83 (TPRSINTGAS), and 96-105 (VSSNVSTATT). Positions 117-151 (CDQCRKKKIKCDFIEGHDINPDQSCTGCRKIGEKC) form a DNA-binding region, zn(2)-C6 fungal-type. Disordered regions lie at residues 155–224 (RIPL…ATST), 267–350 (QRRP…SAIP), 399–423 (LQQQ…SNGG), and 462–496 (AEVE…QNLP). Polar residues-rich tracts occupy residues 196–206 (SVSNPVNAVNE) and 274–288 (SLAS…GKTN). Residues 289–303 (QQQPLPSQSQPQSLQ) are compositionally biased toward low complexity. Polar residues-rich tracts occupy residues 304–323 (NIGN…TFRN), 329–339 (QPSQDSVSEAG), and 404–419 (SLHS…STGI). The span at 473–489 (QKKRKRSNRSSTSKKGK) shows a compositional bias: basic residues.

It belongs to the EDS1/RGT1 family.

It localises to the nucleus. The protein resides in the cytoplasm. In terms of biological role, glucose-responsive transcription factor that regulates expression of several glucose transporter (HXT) genes in response to glucose. In the absence of glucose, it functions as a transcriptional repressor, whereas high concentrations of glucose cause it to function as a transcriptional activator. In cells growing on low levels of glucose, has a neutral role, neither repressing nor activating transcription. This chain is Glucose transport transcription regulator RGT1 (RGT1), found in Kluyveromyces lactis (strain ATCC 8585 / CBS 2359 / DSM 70799 / NBRC 1267 / NRRL Y-1140 / WM37) (Yeast).